Here is a 472-residue protein sequence, read N- to C-terminus: 3-isopropylmalate dehydratase large subunit (472 aa).

Residues Cys-351, Cys-412, and Cys-415 each contribute to the [4Fe-4S] cluster site.

It belongs to the aconitase/IPM isomerase family. LeuC type 1 subfamily. Heterodimer of LeuC and LeuD. It depends on [4Fe-4S] cluster as a cofactor.

The catalysed reaction is (2R,3S)-3-isopropylmalate = (2S)-2-isopropylmalate. The protein operates within amino-acid biosynthesis; L-leucine biosynthesis; L-leucine from 3-methyl-2-oxobutanoate: step 2/4. In terms of biological role, catalyzes the isomerization between 2-isopropylmalate and 3-isopropylmalate, via the formation of 2-isopropylmaleate. This is 3-isopropylmalate dehydratase large subunit from Marinobacter nauticus (strain ATCC 700491 / DSM 11845 / VT8) (Marinobacter aquaeolei).